A 419-amino-acid chain; its full sequence is Probable G-protein coupled receptor 63 (419 aa).

Over 1 to 81 (MVFSAVLTAF…AFKSLNLPLQ (81 aa)) the chain is Extracellular. N-linked (GlcNAc...) asparagine glycans are attached at residues N16, N28, and N62. A helical transmembrane segment spans residues 82–104 (ITLSAIMIFILFVSFLGNLVVCL). The Cytoplasmic segment spans residues 105 to 115 (MVYQKAAMRSA). The chain crosses the membrane as a helical span at residues 116–138 (INILLASLAFADMLLAVLNMPFA). Residues 139 to 157 (LVTILTTRWIFGKFFCRVS) are Extracellular-facing. Residues 158-177 (AMFFWLFVIEGVAILLIISI) traverse the membrane as a helical segment. At 178–196 (DRFLIIVQRQDKLNPYRAK) the chain is on the cytoplasmic side. Residues 197-216 (VLIAVSWATSFCVAFPLAVG) form a helical membrane-spanning segment. At 217–240 (NPDLQIPSRAPQCVFGYTTNPGYQ) the chain is on the extracellular side. A helical membrane pass occupies residues 241-263 (AYVILISLISFFIPFLVILYSFM). At 264–315 (GILNTLRHNALRIHSYPEGICLSQASKLGLMSLQRPFQMSIDMGFKTRAFTT) the chain is on the cytoplasmic side. A helical transmembrane segment spans residues 316–338 (ILILFAVFIVCWAPFTTYSLVAT). Over 339 to 352 (FSKHFYYQHNFFEI) the chain is Extracellular. The chain crosses the membrane as a helical span at residues 353 to 375 (STWLLWLCYLKSALNPLIYYWRI). At 376–419 (KKFHDACLDMMPKSFKFLPQLPGHTKRRIRPSAVYVCGEHRTVV) the chain is on the cytoplasmic side.

It belongs to the G-protein coupled receptor 1 family. In terms of tissue distribution, expressed in brain; detected in the frontal cortex, with lower levels in the thalamus, caudate, hypothalamus and midbrain.

The protein localises to the cell membrane. Functionally, orphan receptor. May play a role in brain function. The protein is Probable G-protein coupled receptor 63 (GPR63) of Homo sapiens (Human).